The chain runs to 43 residues: Cytochrome b559 subunit beta (43 aa).

Residues 18–34 (WLAVHGLAIPTVFFLGG) traverse the membrane as a helical segment. Residue histidine 22 participates in heme binding.

Belongs to the PsbE/PsbF family. In terms of assembly, heterodimer of an alpha subunit and a beta subunit. PSII is composed of 1 copy each of membrane proteins PsbA, PsbB, PsbC, PsbD, PsbE, PsbF, PsbH, PsbI, PsbJ, PsbK, PsbL, PsbM, PsbT, PsbX, PsbY, PsbZ, Psb30/Ycf12, at least 3 peripheral proteins of the oxygen-evolving complex and a large number of cofactors. It forms dimeric complexes. It depends on heme b as a cofactor.

The protein resides in the plastid. The protein localises to the chloroplast thylakoid membrane. Functionally, this b-type cytochrome is tightly associated with the reaction center of photosystem II (PSII). PSII is a light-driven water:plastoquinone oxidoreductase that uses light energy to abstract electrons from H(2)O, generating O(2) and a proton gradient subsequently used for ATP formation. It consists of a core antenna complex that captures photons, and an electron transfer chain that converts photonic excitation into a charge separation. The polypeptide is Cytochrome b559 subunit beta (Thalassiosira pseudonana (Marine diatom)).